The chain runs to 440 residues: Transposon Ty1-DR1 Gag polyprotein (440 aa).

Composition is skewed to polar residues over residues 1-10, 48-60, and 127-152; these read MESQQLSNYP, TKAN…TPAS, and QSQF…GNTF. Disordered stretches follow at residues 1–93, 126–173, and 352–440; these read MESQ…MMTQ, PQSQ…RPPP, and GSRN…PGTY. Residues 153-165 are compositionally biased toward low complexity; it reads TDSSSADSDMTST. The segment at 299-401 is RNA-binding; sequence NNGIHINNKV…NSKSKTARAH (103 aa). Low complexity predominate over residues 402 to 418; that stretch reads NVSTSNNSPSTDNDSIS. The residue at position 416 (Ser416) is a Phosphoserine. The segment covering 419–428 has biased composition (polar residues); it reads KSTTEPIQLN. Over residues 429-440 the composition is skewed to basic and acidic residues; that stretch reads NKHDLHLRPGTY.

As to quaternary structure, homotrimer.

It is found in the cytoplasm. In terms of biological role, capsid protein (CA) is the structural component of the virus-like particle (VLP), forming the shell that encapsulates the retrotransposons dimeric RNA genome. The particles are assembled from trimer-clustered units and there are holes in the capsid shells that allow for the diffusion of macromolecules. CA also has nucleocapsid-like chaperone activity, promoting primer tRNA(i)-Met annealing to the multipartite primer-binding site (PBS), dimerization of Ty1 RNA and initiation of reverse transcription. The polypeptide is Transposon Ty1-DR1 Gag polyprotein (TY1A-DR1) (Saccharomyces cerevisiae (strain ATCC 204508 / S288c) (Baker's yeast)).